The sequence spans 473 residues: Sulfhydrylase-like protein lolC1 (473 aa).

Lys226 bears the N6-(pyridoxal phosphate)lysine mark.

The protein belongs to the trans-sulfuration enzymes family. Pyridoxal 5'-phosphate is required as a cofactor.

It functions in the pathway alkaloid biosynthesis. Sulfhydrylase-like protein; part of the gene cluster that mediates the biosynthesis of loline alkaloids, potent insecticidal agents composed of a pyrrolizidine ring system and an uncommon ether bridge linking carbons 2 and 7. Lolines are structurally differentiated by the various modifications of the L-amino group and include norloline, loline, N-methylloline, N-acetylloline, N-acetylnorloline, and N-formylloline. The first committed step is the condensation of O-acetyl-L-homoserine (derived from L-aspartic acid) and L-proline, probably catalyzed by the gamma-type pyridoxal 5'-phosphate(PLP)-dependent enzyme lolC, to give the diamino diacid, NACPP. Ensuing cyclization, decarboxylation, and acetylation steps yield 1-exo-acetamidopyrrolizidine (AcAP). LolO is required for installation of the ether bridge upon the pathway intermediate, 1-exo-acetamidopyrrolizidine (AcAP). In sequential 2-oxoglutarate- and O(2)-consuming steps, lolO removes hydrogens from C2 and C7 of AcAP to form both carbon-oxygen bonds in N-acetylnorloline (NANL), the precursor to all other lolines. The enzymes lolD, lolE, lolF and lolT have also been proposed to be involved in the ether-bridge installation. Further processing of the exocyclic moiety of NANL by fungal N-acetamidase (LolN), methyltransferase (LolM), and cytochrome P450 (LolP) enzymes, with occasional involvement of a plant acetyltransferase, generates the other known lolines. LolN transforms NANL to norlonine which is monomethylated and dimethylated to respectively lonine and N-methyllonine (NML) by lolM. LolP catalyzes hydroxylation of the methyl group in N-methylloline (NML) and further oxygenation to N-formylloline (NFL). A plant acetyltransferase is responsible for the acetylation of loline to form N-acetylloline (NAL). LolA might interact with aspartate kinase to prevent feedback inhibition of its activity by these end products and thereby promote production of L-homoserine from L-aspartate. The sequence is that of Sulfhydrylase-like protein lolC1 from Epichloe uncinata (Endophyte fungus).